Here is a 91-residue protein sequence, read N- to C-terminus: Thioredoxin (91 aa).

Residues 2–91 form the Thioredoxin domain; sequence SDSIVHVTDD…SRQSEVEATK (90 aa). C33 and C36 are oxidised to a cystine.

The protein belongs to the thioredoxin family.

Functionally, participates in various redox reactions through the reversible oxidation of its active center dithiol to a disulfide and catalyzes dithiol-disulfide exchange reactions. The sequence is that of Thioredoxin (trxA) from Thiocapsa roseopersicina.